Reading from the N-terminus, the 262-residue chain is NAD-dependent glucose-6-phosphate dehydrogenase (262 aa).

N90, S115, Y152, and K156 together coordinate NAD(+). Y152 acts as the Proton acceptor in catalysis.

Belongs to the NAD(P)-dependent epimerase/dehydratase family. In terms of assembly, homodimer.

It catalyses the reaction D-glucose 6-phosphate + NAD(+) = 6-phospho-D-glucono-1,5-lactone + NADH + H(+). The protein operates within carbohydrate degradation; pentose phosphate pathway. Functionally, catalyzes the NAD-dependent oxidation of glucose 6-phosphate to 6-phosphogluconolactone. The protein is NAD-dependent glucose-6-phosphate dehydrogenase of Haloferax volcanii (strain ATCC 29605 / DSM 3757 / JCM 8879 / NBRC 14742 / NCIMB 2012 / VKM B-1768 / DS2) (Halobacterium volcanii).